Consider the following 530-residue polypeptide: ATP synthase subunit alpha 3 (530 aa).

ATP is bound at residue 174–181 (GDRATGKT). Residues 507–522 (TASATAPPDPPAASAA) show a composition bias toward low complexity. A disordered region spans residues 507–530 (TASATAPPDPPAASAAELPQPDSP).

The protein belongs to the ATPase alpha/beta chains family. In terms of assembly, F-type ATPases have 2 components, CF(1) - the catalytic core - and CF(0) - the membrane proton channel. CF(1) has five subunits: alpha(3), beta(3), gamma(1), delta(1), epsilon(1). CF(0) has three main subunits: a(1), b(2) and c(9-12). The alpha and beta chains form an alternating ring which encloses part of the gamma chain. CF(1) is attached to CF(0) by a central stalk formed by the gamma and epsilon chains, while a peripheral stalk is formed by the delta and b chains.

The protein resides in the cell inner membrane. It carries out the reaction ATP + H2O + 4 H(+)(in) = ADP + phosphate + 5 H(+)(out). In terms of biological role, produces ATP from ADP in the presence of a proton gradient across the membrane. The alpha chain is a regulatory subunit. The polypeptide is ATP synthase subunit alpha 3 (Paraburkholderia xenovorans (strain LB400)).